Reading from the N-terminus, the 545-residue chain is Lysine--tRNA ligase (545 aa).

The 'HIGH' region signature appears at 42–50; the sequence is PSGVPHIGH. The 'KMSKS' region motif lies at 307 to 311; it reads PLSSS.

Belongs to the class-I aminoacyl-tRNA synthetase family.

The protein localises to the cytoplasm. It carries out the reaction tRNA(Lys) + L-lysine + ATP = L-lysyl-tRNA(Lys) + AMP + diphosphate. The polypeptide is Lysine--tRNA ligase (Haloarcula marismortui (strain ATCC 43049 / DSM 3752 / JCM 8966 / VKM B-1809) (Halobacterium marismortui)).